The following is a 156-amino-acid chain: MGRKRRVSRRVPPPDARYNSVVLAKFICRMMLAGKKATAVGIMYDCLERIQQRTGEEPLPVFTKALENVKPAVEVKSRRVGGSTYQVPMEIRETRREALGMRWIIGAARRRSGRGMSERLAAEILDAYHSTGTAFKRKEDTHRMAEANKAFSHYRW.

The protein belongs to the universal ribosomal protein uS7 family. As to quaternary structure, part of the 30S ribosomal subunit. Contacts proteins S9 and S11.

Functionally, one of the primary rRNA binding proteins, it binds directly to 16S rRNA where it nucleates assembly of the head domain of the 30S subunit. Is located at the subunit interface close to the decoding center, probably blocks exit of the E-site tRNA. In Treponema pallidum (strain Nichols), this protein is Small ribosomal subunit protein uS7.